Consider the following 89-residue polypeptide: Putative membrane protein insertion efficiency factor (89 aa).

Residues 68–89 are disordered; the sequence is VPPPNSDARNAPHEAEASSHRL. A compositionally biased stretch (basic and acidic residues) spans 77-89; sequence NAPHEAEASSHRL.

This sequence belongs to the UPF0161 family.

The protein localises to the cell inner membrane. Its function is as follows. Could be involved in insertion of integral membrane proteins into the membrane. In Burkholderia thailandensis (strain ATCC 700388 / DSM 13276 / CCUG 48851 / CIP 106301 / E264), this protein is Putative membrane protein insertion efficiency factor.